The primary structure comprises 682 residues: Putative protein RhsE (682 aa).

Basic and acidic residues predominate over residues 348–360 (ENGEREKAQRRSL). The segment at 348-372 (ENGEREKAQRRSLAETLQQEGSENG) is disordered.

This sequence belongs to the RHS family.

In terms of biological role, rhs elements have a nonessential function. They may play an important role in the natural ecology of the cell. The protein is Putative protein RhsE (rhsE) of Escherichia coli (strain K12).